The primary structure comprises 148 residues: Large ribosomal subunit protein uL22c (148 aa).

The protein belongs to the universal ribosomal protein uL22 family. As to quaternary structure, part of the 50S ribosomal subunit.

The protein resides in the plastid. It localises to the chloroplast. In terms of biological role, this protein binds specifically to 23S rRNA. Functionally, the globular domain of the protein is located near the polypeptide exit tunnel on the outside of the subunit, while an extended beta-hairpin is found that lines the wall of the exit tunnel in the center of the 70S ribosome. In Triticum aestivum (Wheat), this protein is Large ribosomal subunit protein uL22c (rpl22).